The following is a 557-amino-acid chain: Multidrug transporter FLR1 (557 aa).

3 N-linked (GlcNAc...) asparagine glycosylation sites follow: Asn33, Asn48, and Asn106. The span at 44 to 57 (SESSNMSFNSGSEE) shows a compositional bias: low complexity. Positions 44–67 (SESSNMSFNSGSEENSQEKSVEDL) are disordered. Helical transmembrane passes span 113-133 (ALIIIQTMLLTCVNYMGSSIY), 149-169 (VVGTLNLSLYVLGYGLGPIVF), 181-201 (LPVYMITFFLFTMLQIGCALA), 204-224 (FAGLVILRFITGVLCSPALST), 238-258 (LALVLGLWSIGAVAAPVLAPL), 271-291 (WIFWLLFFCCCATMLLLTFFF), 355-375 (LYIALCYGAFYLFFEAFPIVF), and 387-407 (GLAYFGFCVGCIFAYIILLVF). Asn418 carries an N-linked (GlcNAc...) asparagine glycan. The next 4 membrane-spanning stretches (helical) occupy residues 426-446 (TLILAMCIGWCIPLALFMFGW), 450-470 (VHWILPIISEVFFVLGCFNIF), 484-506 (YVASVFAGNGFARSSFAAAFPLF), and 521-541 (VAWGSSLVGFFTIGLWVIPFV).

Belongs to the major facilitator superfamily.

It localises to the cell membrane. Multidrug transporter that confers resistance to 5-flucytosine (5-FC) and clotrimazole. Also confers resistance to benomyl, but not 4-nitroquinoline-N-oxide, cycloheximide, or fluconazole. Plays direct roles in extrusion of 5-flucytosine and clotrimazole. The sequence is that of Multidrug transporter FLR1 from Candida glabrata (strain ATCC 2001 / BCRC 20586 / JCM 3761 / NBRC 0622 / NRRL Y-65 / CBS 138) (Yeast).